Consider the following 177-residue polypeptide: Calcium-binding protein CML38 (177 aa).

A compositionally biased stretch (polar residues) spans 1 to 11; that stretch reads MKNNTQPQSSF. Residues 1-44 are disordered; sequence MKNNTQPQSSFKKLCRKLSPKREDSAGEIQQHNSSNGEDKNREL. EF-hand domains lie at 39-74, 75-110, 111-146, and 147-177; these read DKNR…LGEQ, LSDE…DDEE, EKKM…LGES, and RTTD…LMMR. Ca(2+) contacts are provided by Asp-52, Asn-54, Asp-56, Arg-58, Glu-63, Asp-88, Asp-90, Asp-92, Met-94, and Glu-99. The Ca(2+) site is built by Asp-160, Asn-162, Asp-164, and Glu-171.

Binds to ABCG36. Expressed in cotyledons and guard cells of young leaves. In mature root, expressed in the epidermis, trichoblasts, young lateral root and root tip. Expressed from stage 9 to 15 of flower development in anther wall.

Potential calcium sensor that binds calcium in vitro. The polypeptide is Calcium-binding protein CML38 (Arabidopsis thaliana (Mouse-ear cress)).